A 492-amino-acid polypeptide reads, in one-letter code: N-succinylglutamate 5-semialdehyde dehydrogenase (492 aa).

220–225 (GSASTG) serves as a coordination point for NAD(+). Active-site residues include Glu243 and Cys277.

The protein belongs to the aldehyde dehydrogenase family. AstD subfamily.

The enzyme catalyses N-succinyl-L-glutamate 5-semialdehyde + NAD(+) + H2O = N-succinyl-L-glutamate + NADH + 2 H(+). It functions in the pathway amino-acid degradation; L-arginine degradation via AST pathway; L-glutamate and succinate from L-arginine: step 4/5. Its function is as follows. Catalyzes the NAD-dependent reduction of succinylglutamate semialdehyde into succinylglutamate. The chain is N-succinylglutamate 5-semialdehyde dehydrogenase from Salmonella schwarzengrund (strain CVM19633).